Reading from the N-terminus, the 256-residue chain is Omega-amidase YafV (256 aa).

Residues 4 to 234 (LKITLLQQPL…ATRIDAELSM (231 aa)) enclose the CN hydrolase domain. The active-site Proton acceptor is the Glu-42. Lys-107 (proton donor) is an active-site residue. Residue Cys-141 is the Nucleophile of the active site.

This sequence belongs to the carbon-nitrogen hydrolase superfamily. NIT1/NIT2 family.

It catalyses the reaction a monoamide of a dicarboxylate + H2O = a dicarboxylate + NH4(+). Its function is as follows. Hydrolyzes alpha-ketoglutaramate (a-KGM) to alpha-ketoglutarate (alpha-KG) and ammonia, has weak activity on L-glutamine, almost no activity on deaminated glutathione (dGSH) and none on glutathione. May function as a metabolite repair enzyme. The chain is Omega-amidase YafV (yafV) from Escherichia coli (strain K12).